The following is a 245-amino-acid chain: Sugar fermentation stimulation protein homolog (245 aa).

It belongs to the SfsA family.

This chain is Sugar fermentation stimulation protein homolog, found in Yersinia pseudotuberculosis serotype I (strain IP32953).